The sequence spans 240 residues: UDP-2,3-diacylglucosamine hydrolase (240 aa).

Asp7, His9, Asp40, Asn78, and His113 together coordinate Mn(2+). 78–79 (NR) provides a ligand contact to substrate. Substrate contacts are provided by Asp121, Ser159, Thr163, Lys166, and His194. Mn(2+)-binding residues include His194 and His196.

It belongs to the LpxH family. It depends on Mn(2+) as a cofactor.

It is found in the cell inner membrane. It catalyses the reaction UDP-2-N,3-O-bis[(3R)-3-hydroxytetradecanoyl]-alpha-D-glucosamine + H2O = 2-N,3-O-bis[(3R)-3-hydroxytetradecanoyl]-alpha-D-glucosaminyl 1-phosphate + UMP + 2 H(+). Its pathway is glycolipid biosynthesis; lipid IV(A) biosynthesis; lipid IV(A) from (3R)-3-hydroxytetradecanoyl-[acyl-carrier-protein] and UDP-N-acetyl-alpha-D-glucosamine: step 4/6. Hydrolyzes the pyrophosphate bond of UDP-2,3-diacylglucosamine to yield 2,3-diacylglucosamine 1-phosphate (lipid X) and UMP by catalyzing the attack of water at the alpha-P atom. Involved in the biosynthesis of lipid A, a phosphorylated glycolipid that anchors the lipopolysaccharide to the outer membrane of the cell. The protein is UDP-2,3-diacylglucosamine hydrolase of Pseudomonas putida (strain W619).